The sequence spans 86 residues: Anti-adapter protein IraP (86 aa).

The stretch at 1–36 (MKNLIAELLFKLAQKEEESKELCAQVEALEIIVTAM) forms a coiled coil.

The protein belongs to the IraP family. In terms of assembly, interacts with RssB.

The protein resides in the cytoplasm. Its function is as follows. Inhibits RpoS proteolysis by regulating RssB activity, thereby increasing the stability of the sigma stress factor RpoS especially during phosphate starvation, but also in stationary phase and during nitrogen starvation. Its effect on RpoS stability is due to its interaction with RssB, which probably blocks the interaction of RssB with RpoS, and the consequent delivery of the RssB-RpoS complex to the ClpXP protein degradation pathway. This Shigella flexneri serotype 5b (strain 8401) protein is Anti-adapter protein IraP.